The sequence spans 113 residues: Probable protein L3 (113 aa).

The chain is Probable protein L3 from Bos taurus (Bovine).